The following is a 407-amino-acid chain: Phosphopentomutase (407 aa).

Mn(2+) is bound by residues aspartate 10, aspartate 306, histidine 311, aspartate 347, histidine 348, and histidine 359.

Belongs to the phosphopentomutase family. It depends on Mn(2+) as a cofactor.

It localises to the cytoplasm. The catalysed reaction is 2-deoxy-alpha-D-ribose 1-phosphate = 2-deoxy-D-ribose 5-phosphate. It carries out the reaction alpha-D-ribose 1-phosphate = D-ribose 5-phosphate. It functions in the pathway carbohydrate degradation; 2-deoxy-D-ribose 1-phosphate degradation; D-glyceraldehyde 3-phosphate and acetaldehyde from 2-deoxy-alpha-D-ribose 1-phosphate: step 1/2. Functionally, isomerase that catalyzes the conversion of deoxy-ribose 1-phosphate (dRib-1-P) and ribose 1-phosphate (Rib-1-P) to deoxy-ribose 5-phosphate (dRib-5-P) and ribose 5-phosphate (Rib-5-P), respectively. The polypeptide is Phosphopentomutase (Salmonella arizonae (strain ATCC BAA-731 / CDC346-86 / RSK2980)).